The chain runs to 85 residues: COMM domain-containing protein 6 (85 aa).

M1 bears the N-acetylmethionine mark. The COMM domain maps to 18-85; sequence QLVDFQWKLG…KEIAAVIETV (68 aa).

This sequence belongs to the COMM domain-containing protein 6 family. In terms of assembly, component of the commander complex consisting of the CCC subcomplex and the retriever subcomplex. Component of the CCC (COMMD/CCDC22/CCDC93) subcomplex consisting of COMMD1, COMMD2, COMMD3, COMMD4, COMMD5, COMMD6, COMMD7, COMMD8, COMMD9, COMMD10, CCDC22 and CCDC93; within the complex forms a heterodimer with COMMD1. May form a homodimer with isoform 1. Interacts with RELA, RELB, NFKB1/p105. Does not interact with NFKBIB. Interacts with CCDC22, CCDC93, SCNN1B, CUL4A. In terms of tissue distribution, ubiquitous. Expressed in brain, heart, skeletal muscle, lung, pancreas, liver, kidney, small intestine and placenta.

It is found in the nucleus. It localises to the cytoplasm. Its function is as follows. Scaffold protein in the commander complex that is essential for endosomal recycling of transmembrane cargos; the commander complex is composed of the CCC subcomplex and the retriever subcomplex. May modulate activity of cullin-RING E3 ubiquitin ligase (CRL) complexes. Down-regulates activation of NF-kappa-B. Inhibits TNF-induced NFKB1 activation. The sequence is that of COMM domain-containing protein 6 (COMMD6) from Homo sapiens (Human).